A 279-amino-acid polypeptide reads, in one-letter code: Oxygen-dependent coproporphyrinogen-III oxidase (279 aa).

Ser102 contacts substrate. 2 residues coordinate a divalent metal cation: His106 and His116. His116 functions as the Proton donor in the catalytic mechanism. Residue 118–120 participates in substrate binding; sequence NTR. The a divalent metal cation site is built by His149 and His179. The interval 244 to 279 is important for dimerization; sequence YVEFNLLYDRGTKFGLMTDGNVEAILMSLPPEVKFN.

Belongs to the aerobic coproporphyrinogen-III oxidase family. As to quaternary structure, homodimer. A divalent metal cation serves as cofactor.

Its subcellular location is the cytoplasm. It carries out the reaction coproporphyrinogen III + O2 + 2 H(+) = protoporphyrinogen IX + 2 CO2 + 2 H2O. It participates in porphyrin-containing compound metabolism; protoporphyrin-IX biosynthesis; protoporphyrinogen-IX from coproporphyrinogen-III (O2 route): step 1/1. Functionally, involved in the heme biosynthesis. Catalyzes the aerobic oxidative decarboxylation of propionate groups of rings A and B of coproporphyrinogen-III to yield the vinyl groups in protoporphyrinogen-IX. The sequence is that of Oxygen-dependent coproporphyrinogen-III oxidase from Rickettsia africae (strain ESF-5).